The chain runs to 275 residues: Penicillin-insensitive murein endopeptidase (275 aa).

The signal sequence occupies residues 1-19 (MKKWIAGLLALIAISPVMA). Disulfide bonds link Cys-44-Cys-264, Cys-187-Cys-235, and Cys-216-Cys-223. Zn(2+) contacts are provided by His-110, His-113, Asp-120, Asp-147, and His-211. A disordered region spans residues 234–262 (GCGAELESWFQPHQPSAKPGKTLPPPLPP).

It belongs to the peptidase M74 family. Dimer. It depends on Zn(2+) as a cofactor.

The protein localises to the periplasm. Murein endopeptidase that cleaves the D-alanyl-meso-2,6-diamino-pimelyl amide bond that connects peptidoglycan strands. Likely plays a role in the removal of murein from the sacculus. The protein is Penicillin-insensitive murein endopeptidase of Yersinia enterocolitica serotype O:8 / biotype 1B (strain NCTC 13174 / 8081).